The primary structure comprises 84 residues: Anaphase-promoting complex subunit 11 (84 aa).

The segment at 34–77 (CPDCKLPGDDCPLIWGACNHAFHLHCILKWVNSQTSQAHCPMCR) adopts an RING-type; atypical zinc-finger fold.

It belongs to the RING-box family. As to quaternary structure, part of the APC/C complex composed of at least 10 subunits. Interacts with APC2.

It is found in the cytoplasm. The protein resides in the nucleus. The protein operates within protein modification; protein ubiquitination. Its function is as follows. Component of the anaphase promoting complex/cyclosome (APC/C), a cell cycle-regulated E3 ubiquitin-protein ligase complex that controls progression through mitosis and the G1 phase of the cell cycle. The APC/C complex controls several key steps in the cell cycle by mediating ubiquitination and subsequent degradation of target proteins such as cyclins. The APC/C complex is required for the female gametophyte development and is involved in several aspect of development by controlling cell division and cell elongation. Involved in the control of endoreduplication. May recruit the E2 ubiquitin-conjugating enzymes to the complex. The polypeptide is Anaphase-promoting complex subunit 11 (Arabidopsis thaliana (Mouse-ear cress)).